We begin with the raw amino-acid sequence, 327 residues long: GMP reductase (327 aa).

Cys-175 acts as the Thioimidate intermediate in catalysis. An NADP(+)-binding site is contributed by 204–227; the sequence is IIADGGIRTNGDVAKSIRFGATMV.

This sequence belongs to the IMPDH/GMPR family. GuaC type 2 subfamily.

The catalysed reaction is IMP + NH4(+) + NADP(+) = GMP + NADPH + 2 H(+). Catalyzes the irreversible NADPH-dependent deamination of GMP to IMP. It functions in the conversion of nucleobase, nucleoside and nucleotide derivatives of G to A nucleotides, and in maintaining the intracellular balance of A and G nucleotides. The polypeptide is GMP reductase (Bacillus cereus (strain ZK / E33L)).